A 342-amino-acid polypeptide reads, in one-letter code: uncharacterized protein (342 aa).

Substrate is bound at residue Arg-69. The Proton donor role is filled by His-176. Residue Asp-240 participates in substrate binding.

It belongs to the aldose epimerase family.

This is an uncharacterized protein from Saccharomyces cerevisiae (strain ATCC 204508 / S288c) (Baker's yeast).